We begin with the raw amino-acid sequence, 154 residues long: CS6 fimbrial subunit A (154 aa).

The first 18 residues, 1–18 (MKKTIGLILILASFGSHA), serve as a signal peptide directing secretion.

Its subcellular location is the fimbrium. Its function is as follows. Fimbriae (also called pili), polar filaments radiating from the surface of the bacterium to a length of 0.5-1.5 micrometers and numbering 100-300 per cell, enable bacteria to colonize the epithelium of specific host organs. This Escherichia coli protein is CS6 fimbrial subunit A (cssA).